The sequence spans 237 residues: Purine nucleoside phosphorylase DeoD-type (237 aa).

Residue His4 participates in a purine D-ribonucleoside binding. Phosphate-binding positions include Gly20, Arg24, Arg43, and 87–90; that span reads RVGT. Residues 179–181 and 203–204 contribute to the a purine D-ribonucleoside site; these read EME and SD. The active-site Proton donor is Asp204.

This sequence belongs to the PNP/UDP phosphorylase family. As to quaternary structure, homohexamer; trimer of homodimers.

The enzyme catalyses a purine D-ribonucleoside + phosphate = a purine nucleobase + alpha-D-ribose 1-phosphate. It catalyses the reaction a purine 2'-deoxy-D-ribonucleoside + phosphate = a purine nucleobase + 2-deoxy-alpha-D-ribose 1-phosphate. Its function is as follows. Catalyzes the reversible phosphorolytic breakdown of the N-glycosidic bond in the beta-(deoxy)ribonucleoside molecules, with the formation of the corresponding free purine bases and pentose-1-phosphate. This is Purine nucleoside phosphorylase DeoD-type from Streptococcus pyogenes serotype M4 (strain MGAS10750).